The sequence spans 354 residues: MSLFDTINSGGAQLLGVAWPTVWALVRILVVAVVILLCVAYLILWERKLIGWMHVRLGPNRVGPAGLLQPIADVLKLLLKEVIHPTAASRWLYLIAPVMTVVPAFAVWAVIPFQAGAVLANINAGLLYAMAISSIGVYAVILAGWASNSKYAFLGAMRAAAQMVSYEISMGFALVLVLMTAGSLNLSEIVGSQQHGFFAGHGVNFLSWNWLPLLPVFVIYFISGIAETNRHPFDVVEGESEIVAGHMIDYSGMAFALFFLAEYINMIVISALAATLFLGGWDAPFEFLSFIPGIFWLVLKVFALLSVFIWARATFPRYRYDQIMRLGWKVFLPVCVFWVIVVGFWMMSPLNIWK.

8 helical membrane passes run 25 to 45 (LVRI…LILW), 91 to 111 (WLYL…WAVI), 126 to 146 (LLYA…AGWA), 170 to 190 (MGFA…SEIV), 205 to 225 (FLSW…ISGI), 253 to 273 (MAFA…SALA), 290 to 310 (FIPG…VFIW), and 330 to 350 (VFLP…MSPL).

It belongs to the complex I subunit 1 family. As to quaternary structure, NDH-1 is composed of 14 different subunits. Subunits NuoA, H, J, K, L, M, N constitute the membrane sector of the complex.

The protein resides in the cell inner membrane. It catalyses the reaction a quinone + NADH + 5 H(+)(in) = a quinol + NAD(+) + 4 H(+)(out). Functionally, NDH-1 shuttles electrons from NADH, via FMN and iron-sulfur (Fe-S) centers, to quinones in the respiratory chain. The immediate electron acceptor for the enzyme in this species is believed to be ubiquinone. Couples the redox reaction to proton translocation (for every two electrons transferred, four hydrogen ions are translocated across the cytoplasmic membrane), and thus conserves the redox energy in a proton gradient. This subunit may bind ubiquinone. The protein is NADH-quinone oxidoreductase subunit H of Burkholderia thailandensis (strain ATCC 700388 / DSM 13276 / CCUG 48851 / CIP 106301 / E264).